The chain runs to 149 residues: Large ribosomal subunit protein uL11 (149 aa).

This sequence belongs to the universal ribosomal protein uL11 family. Part of the ribosomal stalk of the 50S ribosomal subunit. Interacts with L10 and the large rRNA to form the base of the stalk. L10 forms an elongated spine to which L12 dimers bind in a sequential fashion forming a multimeric L10(L12)X complex. One or more lysine residues are methylated.

In terms of biological role, forms part of the ribosomal stalk which helps the ribosome interact with GTP-bound translation factors. This Xanthobacter autotrophicus (strain ATCC BAA-1158 / Py2) protein is Large ribosomal subunit protein uL11.